Consider the following 428-residue polypeptide: NADH-ubiquinone oxidoreductase chain 2 (428 aa).

The next 14 membrane-spanning stretches (helical) occupy residues isoleucine 22–glycine 42, leucine 59–asparagine 79, leucine 84–threonine 104, leucine 108–leucine 128, leucine 140–leucine 160, isoleucine 185–proline 205, tryptophan 218–leucine 238, leucine 241–alanine 261, phenylalanine 269–aspartate 289, alanine 292–serine 312, leucine 332–phenylalanine 352, leucine 356–leucine 376, tyrosine 384–isoleucine 404, and tyrosine 408–leucine 428.

Belongs to the complex I subunit 2 family.

The protein localises to the mitochondrion inner membrane. The enzyme catalyses a ubiquinone + NADH + 5 H(+)(in) = a ubiquinol + NAD(+) + 4 H(+)(out). Its function is as follows. Core subunit of the mitochondrial membrane respiratory chain NADH dehydrogenase (Complex I) that is believed to belong to the minimal assembly required for catalysis. Complex I functions in the transfer of electrons from NADH to the respiratory chain. The immediate electron acceptor for the enzyme is believed to be ubiquinone. This chain is NADH-ubiquinone oxidoreductase chain 2, found in Hyaloraphidium curvatum (Lower fungus).